The sequence spans 202 residues: Large ribosomal subunit protein uL18 (202 aa).

The protein belongs to the universal ribosomal protein uL18 family. In terms of assembly, part of the 50S ribosomal subunit. Contacts the 5S and 23S rRNAs.

This is one of the proteins that bind and probably mediate the attachment of the 5S RNA into the large ribosomal subunit, where it forms part of the central protuberance. The polypeptide is Large ribosomal subunit protein uL18 (Staphylothermus marinus (strain ATCC 43588 / DSM 3639 / JCM 9404 / F1)).